A 409-amino-acid chain; its full sequence is Serine/threonine transporter SstT (409 aa).

The next 9 membrane-spanning stretches (helical) occupy residues 14–34, 48–68, 82–102, 141–161, 192–212, 216–236, 290–310, 322–342, and 357–377; these read GSLV…ATLS, FVGA…AASI, IVIL…LMSF, ALMT…GLAL, IGIF…AIAG, LLLV…PAIV, IPLG…ILTL, ILTA…ASGV, and FGIS…IGVI.

It belongs to the dicarboxylate/amino acid:cation symporter (DAACS) (TC 2.A.23) family.

It is found in the cell inner membrane. It carries out the reaction L-serine(in) + Na(+)(in) = L-serine(out) + Na(+)(out). It catalyses the reaction L-threonine(in) + Na(+)(in) = L-threonine(out) + Na(+)(out). Involved in the import of serine and threonine into the cell, with the concomitant import of sodium (symport system). In Shewanella woodyi (strain ATCC 51908 / MS32), this protein is Serine/threonine transporter SstT.